The following is a 176-amino-acid chain: Inorganic pyrophosphatase (176 aa).

Residues K30, R44, and Y56 each contribute to the substrate site. 3 residues coordinate Mg(2+): D66, D71, and D103. Y142 is a substrate binding site.

The protein belongs to the PPase family. In terms of assembly, homohexamer. Mg(2+) serves as cofactor.

It localises to the cytoplasm. The catalysed reaction is diphosphate + H2O = 2 phosphate + H(+). In terms of biological role, catalyzes the hydrolysis of inorganic pyrophosphate (PPi) forming two phosphate ions. This Escherichia coli O157:H7 protein is Inorganic pyrophosphatase.